Consider the following 1472-residue polypeptide: Vacuolar cation-transporting ATPase YPK9 (1472 aa).

The residue at position 1 (methionine 1) is an N-acetylmethionine. Polar residues-rich tracts occupy residues methionine 1 to glycine 12 and serine 72 to leucine 87. Disordered stretches follow at residues methionine 1–threonine 32, histidine 71–proline 115, and alanine 179–histidine 273. Residues methionine 1–alanine 293 lie on the Cytoplasmic side of the membrane. Threonine 95 carries the post-translational modification Phosphothreonine. Composition is skewed to low complexity over residues serine 103–proline 115 and serine 211–tyrosine 222. The residue at position 108 (serine 108) is a Phosphoserine. Residues serine 234 to glutamate 243 show a composition bias toward acidic residues. A helical membrane pass occupies residues proline 294–tyrosine 315. Residues glutamine 316 to tryptophan 321 are Vacuolar-facing. A helical membrane pass occupies residues tyrosine 322–proline 344. Over histidine 345 to glutamate 488 the chain is Cytoplasmic. The helical transmembrane segment at isoleucine 489–isoleucine 511 threads the bilayer. Topologically, residues aspartate 512–tyrosine 514 are vacuolar. A helical membrane pass occupies residues tyrosine 515 to leucine 533. The Cytoplasmic segment spans residues asparagine 534–serine 693. A helical membrane pass occupies residues phenylalanine 694 to valine 713. Topologically, residues glutamine 714–isoleucine 726 are vacuolar. The helical transmembrane segment at leucine 727–glycine 748 threads the bilayer. The Cytoplasmic segment spans residues threonine 749–glutamine 1244. Aspartate 781 serves as the catalytic 4-aspartylphosphate intermediate. Residues serine 1117 and serine 1120 each carry the phosphoserine modification. Residues aspartate 1187 and aspartate 1191 each coordinate Mg(2+). Residues tyrosine 1245–glycine 1264 traverse the membrane as a helical segment. Residues serine 1265–glutamine 1271 lie on the Vacuolar side of the membrane. Residues phenylalanine 1272 to tryptophan 1289 traverse the membrane as a helical segment. Topologically, residues serine 1290 to serine 1307 are cytoplasmic. The chain crosses the membrane as a helical span at residues proline 1308–isoleucine 1331. The Vacuolar segment spans residues valine 1332–serine 1351. Residues serine 1352–valine 1374 traverse the membrane as a helical segment. The Cytoplasmic segment spans residues glycine 1375–glutamate 1387. A helical membrane pass occupies residues phenylalanine 1388–threonine 1407. Residues glutamate 1408–serine 1423 lie on the Vacuolar side of the membrane. A helical transmembrane segment spans residues phenylalanine 1424–isoleucine 1446. At lysine 1447–valine 1472 the chain is on the cytoplasmic side.

Belongs to the cation transport ATPase (P-type) (TC 3.A.3) family. Type V subfamily.

Its subcellular location is the vacuole membrane. The enzyme catalyses ATP + H2O = ADP + phosphate + H(+). In terms of biological role, vacuolar transporter which plays a role in sequestration of divalent heavy metal ions. The polypeptide is Vacuolar cation-transporting ATPase YPK9 (YPK9) (Saccharomyces cerevisiae (strain ATCC 204508 / S288c) (Baker's yeast)).